The chain runs to 181 residues: Adenylate kinase (181 aa).

10–15 serves as a coordination point for ATP; the sequence is GAGKGT. The interval 30-59 is NMP; sequence STGDLFRYNISNGTELGLEAKKYLDAGDLV. AMP is bound by residues threonine 31, arginine 36, 57–59, 85–88, and glutamine 92; these read DLV and GYPR. The LID stretch occupies residues 126 to 132; sequence GRGRDDD. Residue arginine 127 coordinates ATP. 2 residues coordinate AMP: arginine 129 and arginine 140. Glycine 166 contacts ATP.

The protein belongs to the adenylate kinase family. Monomer.

It is found in the cytoplasm. The catalysed reaction is AMP + ATP = 2 ADP. The protein operates within purine metabolism; AMP biosynthesis via salvage pathway; AMP from ADP: step 1/1. In terms of biological role, catalyzes the reversible transfer of the terminal phosphate group between ATP and AMP. Plays an important role in cellular energy homeostasis and in adenine nucleotide metabolism. The protein is Adenylate kinase of Mycolicibacterium vanbaalenii (strain DSM 7251 / JCM 13017 / BCRC 16820 / KCTC 9966 / NRRL B-24157 / PYR-1) (Mycobacterium vanbaalenii).